We begin with the raw amino-acid sequence, 233 residues long: Tropomyosin (233 aa).

A coiled-coil region spans residues 6–222 (FDTVNEKYQE…KERYKAISDE (217 aa)). The interval 48 to 88 (MERSEERLQTATEKLEEASKAADESERNRKVLENLNNASEE) is disordered. The segment covering 51–79 (SEERLQTATEKLEEASKAADESERNRKVL) has biased composition (basic and acidic residues).

It belongs to the tropomyosin family. Homodimer.

Its function is as follows. Tropomyosin, in association with the troponin complex, plays a central role in the calcium dependent regulation of muscle contraction. This Magallana gigas (Pacific oyster) protein is Tropomyosin.